A 227-amino-acid chain; its full sequence is PKHD-type hydroxylase Mfla_2317 (227 aa).

The 101-residue stretch at 78–178 (KVFPPLFNRY…RVSSFFWMQS (101 aa)) folds into the Fe2OG dioxygenase domain. Fe cation-binding residues include H96, D98, and H159. Residue R169 participates in 2-oxoglutarate binding.

Fe(2+) is required as a cofactor. The cofactor is L-ascorbate.

This Methylobacillus flagellatus (strain ATCC 51484 / DSM 6875 / VKM B-1610 / KT) protein is PKHD-type hydroxylase Mfla_2317.